We begin with the raw amino-acid sequence, 146 residues long: Hemoglobin subunit beta (146 aa).

The region spanning 2-146 is the Globin domain; the sequence is HWSAEEKQLI…VAHALARKYH (145 aa). The heme b site is built by H63 and H92.

This sequence belongs to the globin family. Heterotetramer of two alpha chains and two beta chains. Red blood cells.

Functionally, involved in oxygen transport from the lung to the various peripheral tissues. This chain is Hemoglobin subunit beta (HBB), found in Phasianus colchicus colchicus (Black-necked pheasant).